Reading from the N-terminus, the 541-residue chain is Putative apolipoprotein N-acyltransferase (541 aa).

6 helical membrane passes run 31 to 51 (PLPAWSLAPVQVIALAVAAHA), 65 to 85 (GWLFAMFSFSLGLYWLYVSMH), 89 to 109 (GLAAPLAAAGVLALSAFLALF), 144 to 164 (AACWAALEWLRAVVLTGFPWL), 181 to 201 (LLGVHGMALLAAFAAAALAGL), and 215 to 235 (LAAGVALLLAGAGWLLGQFSW). Positions 248 to 511 (VQGNVEQSQK…AGVLPVAVQG (264 aa)) constitute a CN hydrolase domain. The active-site Proton acceptor is the Glu-292. The active site involves Lys-366. The active-site Nucleophile is Cys-416.

Belongs to the CN hydrolase family. Apolipoprotein N-acyltransferase subfamily.

Its subcellular location is the cell inner membrane. It catalyses the reaction N-terminal S-1,2-diacyl-sn-glyceryl-L-cysteinyl-[lipoprotein] + a glycerophospholipid = N-acyl-S-1,2-diacyl-sn-glyceryl-L-cysteinyl-[lipoprotein] + a 2-acyl-sn-glycero-3-phospholipid + H(+). It functions in the pathway protein modification; lipoprotein biosynthesis (N-acyl transfer). Catalyzes the phospholipid dependent N-acylation of the N-terminal cysteine of apolipoprotein, the last step in lipoprotein maturation. This is Putative apolipoprotein N-acyltransferase from Bordetella parapertussis (strain 12822 / ATCC BAA-587 / NCTC 13253).